The chain runs to 287 residues: MVNDLTPHFEDVQAHYDLSDDFFRLFLDPTQTYSCAHFEREDMTLEEAQIAKIDLALGKLGLQPGMTLLDIGCGWGATMRRAIAQYDVNVVGLTLSKNQAAHVQKSFDEMDTPRDRRVLLAGWEQFNEPVDRIVSIGAFEHFGHDRHADFFARAHKILPPDGVLLLHTITGLTRQQMVDHGLPLTLWLARFLKFIATEIFPGGQPPTIEMVEEQSAKTGFTLTRRQSLQPHYARTLDLWAEALQEHKSEAIAIQSEEVYERYMKYLTGCAKLFRVGYIDVNQFTLAK.

Residues 33 to 34, 72 to 74, 94 to 99, 123 to 124, and isoleucine 136 contribute to the S-adenosyl-L-methionine site; these read YS, GCG, TLSKNQ, and WE. The active site involves cysteine 269.

It belongs to the CFA/CMAS family.

It carries out the reaction a 1-acyl-2-(9Z)-enoyl-sn-glycero-3-phospholipid + S-adenosyl-L-methionine = a 1-acyl-2-(9-cyclopronane)-acyl-sn-glycero-3-phospholipid + S-adenosyl-L-homocysteine + H(+). It participates in lipid metabolism; mycolic acid biosynthesis. Catalyzes the conversion of a double bond to a cis cyclopropane ring at the distal position of an alpha mycolic acid via the transfer of a methylene group from S-adenosyl-L-methionine. MmaA2 also catalyzes the biosynthesis of the cis-cyclopropanated methoxymycolates. Cyclopropanated mycolic acids are key factors participating in cell envelope permeability, host immunomodulation and persistence. The sequence is that of Cyclopropane mycolic acid synthase MmaA2 (mmaA2) from Mycobacterium tuberculosis (strain ATCC 25177 / H37Ra).